Consider the following 312-residue polypeptide: R2-like ligand binding oxidase (312 aa).

Residues Glu68, Glu101, and His104 each coordinate Mn(2+). Residues 71–162 constitute a cross-link (3-(O4'-tyrosyl)-valine (Val-Tyr)); that stretch reads VTQDIQPFMA…AAQVRASATY (92 aa). Residue Glu101 participates in Fe cation binding. Positions 167, 202, and 205 each coordinate Fe cation.

This sequence belongs to the ribonucleoside diphosphate reductase small chain family. R2-like ligand binding oxidase subfamily. Homodimer. Fe cation is required as a cofactor. It depends on Mn(2+) as a cofactor.

Functionally, probable oxidase that might be involved in lipid metabolism. The chain is R2-like ligand binding oxidase from Mycobacterium sp. (strain JLS).